An 877-amino-acid chain; its full sequence is ABC transporter A family member 1 (877 aa).

The next 7 helical transmembrane spans lie at 46 to 66 (YFSTGIEILSPIAFIIILFLI), 268 to 288 (VWGGLFYYCGSMISFIFLLYK), 324 to 344 (ILISLITIIVGLACQLPFFLG), 347 to 367 (FFVLIITFSLFTISMSSVAFF), 379 to 399 (IGIGMGIFIVGSIFQLVFSGM), 420 to 440 (IILFFIPMFHFTKVLTDIGNV), and 479 to 499 (LLALIGVYTVLAWYFEHIIPG). The 237-residue stretch at 552–788 (LIICGLSKSY…YGEGYSVNIV (237 aa)) folds into the ABC transporter domain. 591 to 598 (GSNGCGKS) contributes to the ATP binding site.

The protein belongs to the ABC transporter superfamily. ABCA family.

The protein resides in the membrane. This is ABC transporter A family member 1 (abcA1) from Dictyostelium discoideum (Social amoeba).